The primary structure comprises 314 residues: Regulator of microtubule dynamics protein 1 (314 aa).

Lys165 is modified (N6-succinyllysine). 2 TPR repeats span residues 168–204 (AICL…NPKD) and 222–258 (PWYQ…DPNF).

The protein belongs to the RMDN family. Interacts with microtubules.

It localises to the cytoplasm. The protein resides in the cytoskeleton. The protein localises to the spindle. It is found in the spindle pole. This is Regulator of microtubule dynamics protein 1 (RMDN1) from Pongo abelii (Sumatran orangutan).